The primary structure comprises 147 residues: MVEWTDKERSIISDIFSHLDYEDIGPKALSRCLIVYPWTQRHFSGFGNLYNAESIIGNANVAAHGIKVLHGLDRGLKNMDNIEATYADLSTLHSEKLHVDPDNFKLLADCITIVLAAKMGQAFTAEIQGAFQKFLAVVVSALGKQYH.

The Globin domain maps to 3–147 (EWTDKERSII…VVSALGKQYH (145 aa)). Residues His-64 and His-93 each contribute to the heme b site.

Belongs to the globin family. In terms of assembly, heterotetramer of two alpha chains and two beta chains. As to expression, red blood cells.

Functionally, involved in oxygen transport from gills to the various peripheral tissues. In Pagothenia borchgrevinki (Bald rockcod), this protein is Hemoglobin subunit beta-1 (hbb1).